The sequence spans 219 residues: Transmembrane emp24 domain-containing protein 10 (219 aa).

An N-terminal signal peptide occupies residues 1–31 (MSGWSGPLARRGPGPLALLFLFLLGPSSVLA). Residues 1–142 (MSGWSGPLAR…KNYEEIAKVE (142 aa)) form a required for interaction with STX17 region. Over 32-185 (ISFHLPVNSR…RDTNESTNTR (154 aa)) the chain is Lumenal. Positions 41 to 193 (RKCLREEIHK…TRVLYFSIFS (153 aa)) constitute a GOLD domain. The segment at 147–178 (LEVELRRLEDLSESIVNDFAYMKKREEEMRDT) is required for TMED10 and TMED2 cis-Golgi network localization. Dimethylated arginine is present on residues Arg-171 and Arg-176. Asn-179 is a glycosylation site (N-linked (GlcNAc...) asparagine). The chain crosses the membrane as a helical span at residues 186 to 206 (VLYFSIFSMFCLIGLATWQVF). The tract at residues 204–219 (QVFYLRRFFKAKKLIE) is interaction with COPG1. The Cytoplasmic segment spans residues 207 to 219 (YLRRFFKAKKLIE). The interaction with ARF1 and IL1B stretch occupies residues 207–219 (YLRRFFKAKKLIE). The COPII vesicle coat-binding motif lies at 211 to 212 (FF). The COPI vesicle coat-binding motif lies at 211–219 (FFKAKKLIE).

This sequence belongs to the EMP24/GP25L family. Predominantly dimeric and to a lesser extent monomeric in the ER. Monomer and dimer in ERGIC and cis-Golgi network. Forms homooligomer (via GOLD domain); the assembly is promoted by direct binding with leaderless cargos and may form a protein channel that facilitates cargo entry into the ERGIC. Forms heterooligomeric complexes with other members of the p24 family such as TMED2, TMED7 and TMED9. Interacts (via GOLD domain) with TMED2 (via GOLD domain); the complex is required for export of TMED10 from the ER to the cis-Golgi network; the complex is proposed to be involved in cis-Golgi network dynamics and / or biogenesis. Associates with the COPI vesicle coat subunits (coatomer). Tetramerization of the cytoplasmic domain at the Golgi membrane in vitro; the complex is proposed to interact with COPI coatomer and induce budding of the vesicles. Interacts with COPG1; the interaction involves TMED10 homodimer. Interacts with ARF1 (GDP-bound); the interaction probably involves a TMED10 oligomer. Interacts with SEC23A, SEC24B, SEC24C and SEC24D components of the coat protein complex II/COPII, indicative of an association of TMED10 with the COPII vesicle coat. Interacts with CD59. Interacts with MPPE1/PGAP5; the complex might recruit and sort GPI-anchored proteins to the ER-exit site, or the interaction might lead to recycling of PGAP5 between the ER and the Golgi. Interacts with F2LR1/PAR2. Interacts with KDELR2/ERD2; the interaction is disrupted by KDELR2 ligand. Found in a complex composed at least of SURF4, TMED2 and TMED10. Associates with the presenilin-dependent gamma-secretase complex. Interacts with STX17; the interaction is direct. Interacts with IL-1; the interaction is direct. Interacts with RAB21 (active GTP-bound form); the interaction is indirect and regulates TMED10 abundance and localization at the Golgi.

Its subcellular location is the endoplasmic reticulum membrane. It is found in the endoplasmic reticulum-Golgi intermediate compartment membrane. The protein localises to the golgi apparatus membrane. The protein resides in the golgi apparatus. It localises to the cis-Golgi network membrane. Its subcellular location is the trans-Golgi network membrane. It is found in the cytoplasmic vesicle. The protein localises to the secretory vesicle membrane. The protein resides in the cell membrane. It localises to the melanosome. Its function is as follows. Cargo receptor involved in protein vesicular trafficking and quality control in the endoplasmic reticulum (ER) and Golgi. The p24 protein family is a group of transmembrane proteins that bind coat protein complex I/COPI and coat protein complex II/COPII involved in vesicular trafficking between the membranes. Acts at the lumenal side for incorporation of secretory cargo molecules into transport vesicles and involved in vesicle coat formation at the cytoplasmic side. Mainly functions in the early secretory pathway and cycles between the ER, ER-Golgi intermediate compartment (ERGIC) and Golgi, mediating cargo transport through COPI and COPII-coated vesicles. In COPII vesicle-mediated anterograde transport, involved in the transport of GPI-anchored proteins by acting together with TMED2 as their cargo receptor; the function specifically implies SEC24C and SEC24D of the COPII vesicle coat and lipid raft-like microdomains of the ER. Recognizes GPI anchors structural remodeled in the ER by the GPI inositol-deacylase/PGAP1 and the metallophosphoesterase MPPE1/PGAP5. In COPI vesicle-mediated retrograde transport, involved in the biogenesis of COPI vesicles and vesicle coat recruitment. Involved in trafficking of amyloid beta A4 protein and soluble APP-beta release (independent from the modulation of gamma-secretase activity). Involved in the KDELR2-mediated retrograde transport of the toxin A subunit (CTX-A-K63)together with COPI and the COOH terminus of KDELR2. On Golgi membranes, acts as a primary receptor for ARF1-GDP, a GTP-binding protein involved in COPI-vesicle formation. Increases coatomer-dependent GTPase-activating activity of ARFGAP2 which mediates the hydrolysis of ARF1-bound GTP and therefore modulates protein trafficking from the Golgi apparatus. Involved in the exocytic trafficking of G protein-coupled receptors F2LR1/PAR2 (trypsin and tryspin-like enzyme receptor), OPRM1 (opioid receptor) and P2RY4 (UTD and UDP receptor) from the Golgi to the plasma membrane, thus contributing to receptor resensitization. In addition to its cargo receptor activity, may also act as a protein channel after oligomerization, facilitating the post-translational entry of leaderless cytoplasmic cargo into the ERGIC. Involved in the translocation into ERGIC, the vesicle entry and the secretion of leaderless cargos (lacking the secretion signal sequence), including the mature form of interleukin 1/IL-1 family members, the alpha-crystallin B chain HSPB5, the carbohydrate-binding proteins galectin-1/LGALS1 and galectin-3/LGALS3, the microtubule-associated protein Tau/MAPT, and the annexin A1/ANXA1; the translocation process is dependent on cargo protein unfolding and enhanced by chaperones HSP90AB1 and HSP90B1/GRP9. Could also associates with the presenilin-dependent gamma-secretase complex in order to regulate gamma-cleavages of the amyloid beta A4 protein to yield amyloid-beta 40/Abeta40. The polypeptide is Transmembrane emp24 domain-containing protein 10 (TMED10) (Oryctolagus cuniculus (Rabbit)).